Reading from the N-terminus, the 731-residue chain is Golgin subfamily A member 5 (731 aa).

Serine 2 carries the N-acetylserine modification. Residues 2 to 698 (SWFVDLAGKA…IFLRRYPIAR (697 aa)) lie on the Cytoplasmic side of the membrane. The residue at position 89 (arginine 89) is a Dimethylated arginine. The interval 93–222 (EASHPVENAS…PTPNDDGKSH (130 aa)) is disordered. Phosphoserine is present on serine 116. A compositionally biased stretch (basic and acidic residues) spans 134–146 (PTGRVEIRKEKGK). The segment covering 147 to 167 (TPVFQSSQTSSVSSVNPSVTT) has biased composition (low complexity). Polar residues predominate over residues 173-188 (ENSFGSQTHEAASNSD). Basic and acidic residues predominate over residues 189-199 (SSHEGQEESSK). Positions 216–632 (NDDGKSHELS…EQQMNSASGS (417 aa)) form a coiled coil. A helical; Anchor for type IV membrane protein membrane pass occupies residues 699–719 (VFVIIYMALLHLWVMIVLLTY). Topologically, residues 720–731 (TPEMHHDQPYGK) are lumenal.

As to quaternary structure, homodimer. Interacts with RAB1A that has been activated by GTP-binding, and possibly also with OCRL1. Interacts with isoform CASP of CUX1. Highly phosphorylated during mitosis. Phosphorylation is barely detectable during interphase. In terms of tissue distribution, ubiquitous. Highly expressed in seminiferous tubules and Leydig cells in testis, and detected at much lower levels in the other tissues tested. Expression is very low or not detectable in spermatozoa.

The protein resides in the golgi apparatus membrane. In terms of biological role, involved in maintaining Golgi structure. Stimulates the formation of Golgi stacks and ribbons. Involved in intra-Golgi retrograde transport. This Homo sapiens (Human) protein is Golgin subfamily A member 5 (GOLGA5).